A 249-amino-acid polypeptide reads, in one-letter code: Diaminopimelate epimerase (249 aa).

Residues Asn-11 and Asn-60 each coordinate substrate. Cys-69 (proton donor) is an active-site residue. Residues 70–71 (GN), Asn-164, and 182–183 (ER) each bind substrate. Cys-192 acts as the Proton acceptor in catalysis. Position 193 to 194 (193 to 194 (GT)) interacts with substrate.

This sequence belongs to the diaminopimelate epimerase family. Homodimer.

It is found in the cytoplasm. The catalysed reaction is (2S,6S)-2,6-diaminopimelate = meso-2,6-diaminopimelate. Its pathway is amino-acid biosynthesis; L-lysine biosynthesis via DAP pathway; DL-2,6-diaminopimelate from LL-2,6-diaminopimelate: step 1/1. Functionally, catalyzes the stereoinversion of LL-2,6-diaminopimelate (L,L-DAP) to meso-diaminopimelate (meso-DAP), a precursor of L-lysine and an essential component of the bacterial peptidoglycan. The protein is Diaminopimelate epimerase of Campylobacter jejuni (strain RM1221).